The chain runs to 156 residues: RNA pyrophosphohydrolase (156 aa).

The Nudix hydrolase domain occupies 6–148; the sequence is NYRPNVAAIV…KKNIYVKVIK (143 aa). Positions 43–64 match the Nudix box motif; sequence GGIDKGESAKNALFRELKEEIG.

This sequence belongs to the Nudix hydrolase family. RppH subfamily. Requires a divalent metal cation as cofactor.

Accelerates the degradation of transcripts by removing pyrophosphate from the 5'-end of triphosphorylated RNA, leading to a more labile monophosphorylated state that can stimulate subsequent ribonuclease cleavage. The chain is RNA pyrophosphohydrolase from Campylobacter jejuni subsp. doylei (strain ATCC BAA-1458 / RM4099 / 269.97).